Reading from the N-terminus, the 72-residue chain is Translation initiation factor IF-1 (72 aa).

One can recognise an S1-like domain in the interval Met1 to Arg72.

The protein belongs to the IF-1 family. Component of the 30S ribosomal translation pre-initiation complex which assembles on the 30S ribosome in the order IF-2 and IF-3, IF-1 and N-formylmethionyl-tRNA(fMet); mRNA recruitment can occur at any time during PIC assembly.

It is found in the cytoplasm. One of the essential components for the initiation of protein synthesis. Stabilizes the binding of IF-2 and IF-3 on the 30S subunit to which N-formylmethionyl-tRNA(fMet) subsequently binds. Helps modulate mRNA selection, yielding the 30S pre-initiation complex (PIC). Upon addition of the 50S ribosomal subunit IF-1, IF-2 and IF-3 are released leaving the mature 70S translation initiation complex. The protein is Translation initiation factor IF-1 of Shewanella pealeana (strain ATCC 700345 / ANG-SQ1).